Reading from the N-terminus, the 301-residue chain is Homeobox protein knotted-1-like 1 (301 aa).

The tract at residues Cys-141–Glu-170 is disordered. A compositionally biased stretch (low complexity) spans Ala-144–Thr-153. The ELK domain occupies Glu-188–Phe-208. A DNA-binding region (homeobox; TALE-type) is located at residues Leu-209–Ser-272.

It belongs to the TALE/KNOX homeobox family.

Its subcellular location is the nucleus. Functionally, probable transcription factor that may be involved in shoot formation during early embryogenesis. The polypeptide is Homeobox protein knotted-1-like 1 (OSH6) (Oryza sativa subsp. japonica (Rice)).